We begin with the raw amino-acid sequence, 204 residues long: Proteasome subunit beta type-3 (204 aa).

It belongs to the peptidase T1B family. As to quaternary structure, the 26S proteasome consists of a 20S proteasome core and two 19S regulatory subunits. The 20S proteasome core is composed of 28 subunits that are arranged in four stacked rings, resulting in a barrel-shaped structure. The two end rings are each formed by seven alpha subunits, and the two central rings are each formed by seven beta subunits. The catalytic chamber with the active sites is on the inside of the barrel.

It is found in the cytoplasm. The protein localises to the nucleus. Functionally, non-catalytic component of the proteasome, a multicatalytic proteinase complex which is characterized by its ability to cleave peptides with Arg, Phe, Tyr, Leu, and Glu adjacent to the leaving group at neutral or slightly basic pH. The proteasome has an ATP-dependent proteolytic activity. In Oryza sativa subsp. japonica (Rice), this protein is Proteasome subunit beta type-3 (PBC1).